Consider the following 1017-residue polypeptide: EMILIN-1 (1017 aa).

Positions Met-1 to Ala-21 are cleaved as a signal peptide. Residues His-56–Glu-133 enclose the EMI domain. Intrachain disulfides connect Cys-60–Cys-123, Cys-87–Cys-94, and Cys-122–Cys-131. Disordered stretches follow at residues Gly-134–Val-180 and Glu-259–Glu-289. Over residues Arg-154–Ser-167 the composition is skewed to low complexity. An N-linked (GlcNAc...) asparagine glycan is attached at Asn-156. 3 coiled-coil regions span residues Gly-171–Asp-211, Glu-237–His-266, and Leu-310–Thr-374. Residues Arg-383–Ser-403 form a disordered region. A compositionally biased stretch (gly residues) spans Glu-387 to Pro-398. Asn-416, Asn-456, Asn-562, and Asn-659 each carry an N-linked (GlcNAc...) asparagine glycan. Residues Leu-519–Gly-573 are a coiled coil. Positions Leu-676–Ala-697 form a coiled coil. Asn-767 and Asn-795 each carry an N-linked (GlcNAc...) asparagine glycan. A coiled-coil region spans residues Arg-789–Ser-809. A compositionally biased stretch (low complexity) spans Lys-811–Ala-820. The tract at residues Lys-811–Ala-866 is disordered. The Collagen-like domain maps to Gly-815–Pro-865. The span at Pro-822–Pro-841 shows a compositional bias: pro residues. A compositionally biased stretch (low complexity) spans Lys-843–Ala-866. Positions Ala-867 to Leu-1014 constitute a C1q domain.

Homotrimer associated through a moderately stable interaction of the C-terminal globular C1q domains, allowing the nucleation of the triple helix and then a further quaternary assembly to higher-order polymers via intermolecular disulfide bonds. Interacts with EMILIN2. Interacts with EFEMP2; this interaction promotes the incorporation of EFEMP2 into the extracellular matrix.

It localises to the secreted. It is found in the extracellular space. Its subcellular location is the extracellular matrix. Functionally, involved in elastic and collagen fibers formation. It is required for EFEMP2 deposition into the extracellular matrix, and collagen network assembly and cross-linking via protein-lysine 6-oxidase/LOX activity. May be responsible for anchoring smooth muscle cells to elastic fibers, and may be involved the processes that regulate vessel assembly. Has cell adhesive capacity. May have a function in placenta formation and initial organogenesis and a later role in interstitial connective tissue. This chain is EMILIN-1 (Emilin1), found in Mus musculus (Mouse).